Here is a 102-residue protein sequence, read N- to C-terminus: MFAIIETGGKQIKVEEGQEIFVEKLDVNEGDTFTFDKVLFVGGDSVKVGAPTVEGATVTATVNKQGRGKKITVFTYKRRKNSKRKKGHRQPYTKLTIDKINA.

Residues 80–91 show a composition bias toward basic residues; sequence KNSKRKKGHRQP. A disordered region spans residues 80–102; the sequence is KNSKRKKGHRQPYTKLTIDKINA.

The protein belongs to the bacterial ribosomal protein bL21 family. Part of the 50S ribosomal subunit. Contacts protein L20.

In terms of biological role, this protein binds to 23S rRNA in the presence of protein L20. In Staphylococcus aureus (strain Mu3 / ATCC 700698), this protein is Large ribosomal subunit protein bL21.